Consider the following 612-residue polypeptide: BTB/POZ domain-containing protein 9 (612 aa).

One can recognise a BTB domain in the interval 36 to 104 (GDVTFVVEKK…IYTGRATLTD (69 aa)). One can recognise a BACK domain in the interval 142–240 (VCMTFDVASL…SLTELLNVVR (99 aa)). Positions 559-612 (QQSTQKEDSSEEPGTGDLSTPSQQLDPHAPRAPSASSLPPSPGPNLHSPNQQNQ) are disordered. A compositionally biased stretch (low complexity) spans 589 to 612 (RAPSASSLPPSPGPNLHSPNQQNQ).

Detected throughout the gray matter of the spinal cord including the motor neurons (at protein level). In the brain, detected in the neurons of the hippocampus and in the Purkinje cells of the cerebellum (at protein level). Also detected in the terospenial cortex, bed nucleus of the stria terminalis (BST) and the ventrolateral thalamus (VL) (at protein level).

This Rattus norvegicus (Rat) protein is BTB/POZ domain-containing protein 9 (Btbd9).